The chain runs to 134 residues: Large ribosomal subunit protein bL20 (134 aa).

Belongs to the bacterial ribosomal protein bL20 family.

In terms of biological role, binds directly to 23S ribosomal RNA and is necessary for the in vitro assembly process of the 50S ribosomal subunit. It is not involved in the protein synthesizing functions of that subunit. In Allorhizobium ampelinum (strain ATCC BAA-846 / DSM 112012 / S4) (Agrobacterium vitis (strain S4)), this protein is Large ribosomal subunit protein bL20.